A 233-amino-acid chain; its full sequence is Aspartate/glutamate leucyltransferase (233 aa).

Belongs to the R-transferase family. Bpt subfamily.

It is found in the cytoplasm. It carries out the reaction N-terminal L-glutamyl-[protein] + L-leucyl-tRNA(Leu) = N-terminal L-leucyl-L-glutamyl-[protein] + tRNA(Leu) + H(+). The enzyme catalyses N-terminal L-aspartyl-[protein] + L-leucyl-tRNA(Leu) = N-terminal L-leucyl-L-aspartyl-[protein] + tRNA(Leu) + H(+). Its function is as follows. Functions in the N-end rule pathway of protein degradation where it conjugates Leu from its aminoacyl-tRNA to the N-termini of proteins containing an N-terminal aspartate or glutamate. This chain is Aspartate/glutamate leucyltransferase, found in Vibrio parahaemolyticus serotype O3:K6 (strain RIMD 2210633).